A 243-amino-acid polypeptide reads, in one-letter code: MKLLSITLTSIVISMVFYQTPITTEARSLRKTNDQDHFKAGFTDDFVPTSPGNSPGVGHKKGNVNVEGFQDDFKPTEGRKLLKTNVQDHFKTGSTDDFAPTSPGHSPGVGHKKGNVNVESSEDDFKHKEGRKLQQTNGQNHFKTGSTDDFAPTSPGNSPGIGHKKGHANVKGFKDDFAPTEEIRLQKMNGQDHFKTGSTDDFAPTTPGNSPGMGHKKGDDFKPTTPGHSPGVGHAVKNDEPKA.

A signal peptide spans 1-26 (MKLLSITLTSIVISMVFYQTPITTEA). Positions 28 to 44 (SLRKTNDQDHFKAGFTD) are excised as a propeptide. 3 disordered regions span residues 42 to 63 (FTDDFVPTSPGNSPGVGHKKGN), 91 to 173 (KTGS…VKGF), and 189 to 243 (NGQD…EPKA). A Hydroxyproline; partial modification is found at proline 48. Proline 51 carries the hydroxyproline modification. At proline 55 the chain carries Hydroxyproline; partial. The propeptide occupies 60–96 (KKGNVNVEGFQDDFKPTEGRKLLKTNVQDHFKTGSTD). A hydroxyproline mark is found at proline 100, proline 103, and proline 107. Positions 112–148 (KKGNVNVESSEDDFKHKEGRKLQQTNGQNHFKTGSTD) are excised as a propeptide. Polar residues predominate over residues 133 to 147 (LQQTNGQNHFKTGST). 3 positions are modified to hydroxyproline: proline 152, proline 155, and proline 159. The propeptide occupies 164–200 (KKGHANVKGFKDDFAPTEEIRLQKMNGQDHFKTGSTD). Hydroxyproline is present on residues proline 204, proline 207, and proline 211. Positions 216 to 219 (KKGD) are excised as a propeptide. Proline 223, proline 226, and proline 230 each carry hydroxyproline. Positions 235–243 (AVKNDEPKA) are excised as a propeptide.

The protein belongs to the C-terminally encoded plant signaling peptide (CEP) family. As to quaternary structure, interacts with CEP receptors (e.g. CEPR1 and CEPR2). Post-translationally, hydroxylated peptide is more active than non-hydroxylated peptide. The mature small signaling peptide is generated by proteolytic processing of the longer precursor. In terms of tissue distribution, expressed in lateral root primordia and in lateral roots excluding the meristem region. Also present in the aerial tissues, such as leaf petioles and the shoot apex region.

Its subcellular location is the secreted. It localises to the extracellular space. The protein localises to the apoplast. Functionally, extracellular signaling peptide that represses primary root growth rate and significantly inhibits lateral root formation. Modulates leaf morphology. Regulates systemic nitrogen (N)-demand signaling. Mediates up-regulation of genes involved in N uptake and assimilation pathways. The sequence is that of Precursor of CEP9 from Arabidopsis thaliana (Mouse-ear cress).